A 257-amino-acid polypeptide reads, in one-letter code: Pimeloyl-[acyl-carrier protein] methyl ester esterase (257 aa).

The AB hydrolase-1 domain maps to 15 to 241 (HLVLLHGWGL…KAAHAPFVSH (227 aa)). Substrate-binding positions include W22, 82 to 83 (SL), and 143 to 147 (FLALQ). The active-site Nucleophile is S82. Residues D207 and H235 contribute to the active site. H235 contacts substrate.

Belongs to the AB hydrolase superfamily. Carboxylesterase BioH family. As to quaternary structure, monomer.

The protein resides in the cytoplasm. It catalyses the reaction 6-carboxyhexanoyl-[ACP] methyl ester + H2O = 6-carboxyhexanoyl-[ACP] + methanol + H(+). It participates in cofactor biosynthesis; biotin biosynthesis. Functionally, the physiological role of BioH is to remove the methyl group introduced by BioC when the pimeloyl moiety is complete. It allows to synthesize pimeloyl-ACP via the fatty acid synthetic pathway through the hydrolysis of the ester bonds of pimeloyl-ACP esters. The protein is Pimeloyl-[acyl-carrier protein] methyl ester esterase of Klebsiella pneumoniae (strain 342).